Consider the following 412-residue polypeptide: Putative competence-damage inducible protein (412 aa).

The protein belongs to the CinA family.

In Bacillus cereus (strain G9842), this protein is Putative competence-damage inducible protein.